A 612-amino-acid chain; its full sequence is Dihydroxy-acid dehydratase (612 aa).

Asp-81 contacts Mg(2+). Residue Cys-122 participates in [2Fe-2S] cluster binding. Residues Asp-123 and Lys-124 each contribute to the Mg(2+) site. At Lys-124 the chain carries N6-carboxylysine. Cys-196 is a binding site for [2Fe-2S] cluster. Glu-492 serves as a coordination point for Mg(2+). Ser-518 serves as the catalytic Proton acceptor.

This sequence belongs to the IlvD/Edd family. As to quaternary structure, homodimer. [2Fe-2S] cluster is required as a cofactor. The cofactor is Mg(2+).

The enzyme catalyses (2R)-2,3-dihydroxy-3-methylbutanoate = 3-methyl-2-oxobutanoate + H2O. It carries out the reaction (2R,3R)-2,3-dihydroxy-3-methylpentanoate = (S)-3-methyl-2-oxopentanoate + H2O. It participates in amino-acid biosynthesis; L-isoleucine biosynthesis; L-isoleucine from 2-oxobutanoate: step 3/4. The protein operates within amino-acid biosynthesis; L-valine biosynthesis; L-valine from pyruvate: step 3/4. Functions in the biosynthesis of branched-chain amino acids. Catalyzes the dehydration of (2R,3R)-2,3-dihydroxy-3-methylpentanoate (2,3-dihydroxy-3-methylvalerate) into 2-oxo-3-methylpentanoate (2-oxo-3-methylvalerate) and of (2R)-2,3-dihydroxy-3-methylbutanoate (2,3-dihydroxyisovalerate) into 2-oxo-3-methylbutanoate (2-oxoisovalerate), the penultimate precursor to L-isoleucine and L-valine, respectively. The chain is Dihydroxy-acid dehydratase from Paracoccus denitrificans (strain Pd 1222).